The sequence spans 366 residues: tRNA-specific 2-thiouridylase MnmA (366 aa).

ATP is bound by residues 6-13 and M32; that span reads GLSGGVDS. C96 acts as the Nucleophile in catalysis. Residues C96 and C196 are joined by a disulfide bond. Residue G120 participates in ATP binding. Positions 146-148 are interaction with tRNA; the sequence is KDQ. The Cysteine persulfide intermediate role is filled by C196. The segment at 302-303 is interaction with tRNA; sequence RY.

This sequence belongs to the MnmA/TRMU family.

It is found in the cytoplasm. The catalysed reaction is S-sulfanyl-L-cysteinyl-[protein] + uridine(34) in tRNA + AH2 + ATP = 2-thiouridine(34) in tRNA + L-cysteinyl-[protein] + A + AMP + diphosphate + H(+). Its function is as follows. Catalyzes the 2-thiolation of uridine at the wobble position (U34) of tRNA, leading to the formation of s(2)U34. The protein is tRNA-specific 2-thiouridylase MnmA of Treponema denticola (strain ATCC 35405 / DSM 14222 / CIP 103919 / JCM 8153 / KCTC 15104).